Consider the following 318-residue polypeptide: MVPTPITVRVPAKVNLHLSVGDTREDGYHELVTVFQALSMTDEVTVHIADEPGIEVRGEGADSVPTGPSNLAWKAVRALAERCGRDPDEPGVRVSINKGIPVAGGMAGGSADAAAALLALNHLWRLEMGRDELAGIAADIGSDVPFALQGGTALGTGRGEQLIPVLARHTFHWVIALDRRGLETPGVFSELDRLREESRPNRVGEVEPVLEALASGDPRQLALLLGNDLQAAAVSLRPGLRRTLRAGVQAGALAGIVSGSGPTCAFLCTDADAAVRVAAELSGAGVCRTVRVAQGPVPGARLVTDDRADRPTPPQVHA.

The active site involves Lys13. ATP is bound at residue 101–111; it reads PVAGGMAGGSA. Asp143 is an active-site residue. Positions 298–318 are disordered; that stretch reads PGARLVTDDRADRPTPPQVHA.

The protein belongs to the GHMP kinase family. IspE subfamily.

The enzyme catalyses 4-CDP-2-C-methyl-D-erythritol + ATP = 4-CDP-2-C-methyl-D-erythritol 2-phosphate + ADP + H(+). Its pathway is isoprenoid biosynthesis; isopentenyl diphosphate biosynthesis via DXP pathway; isopentenyl diphosphate from 1-deoxy-D-xylulose 5-phosphate: step 3/6. Catalyzes the phosphorylation of the position 2 hydroxy group of 4-diphosphocytidyl-2C-methyl-D-erythritol. This Saccharopolyspora erythraea (strain ATCC 11635 / DSM 40517 / JCM 4748 / NBRC 13426 / NCIMB 8594 / NRRL 2338) protein is 4-diphosphocytidyl-2-C-methyl-D-erythritol kinase.